A 454-amino-acid polypeptide reads, in one-letter code: 3-phosphoshikimate 1-carboxyvinyltransferase (454 aa).

3 residues coordinate 3-phosphoshikimate: lysine 39, serine 40, and arginine 44. Position 39 (lysine 39) interacts with phosphoenolpyruvate. Residues glycine 112 and arginine 140 each coordinate phosphoenolpyruvate. Positions 185, 187, 333, and 360 each coordinate 3-phosphoshikimate. Residue glutamine 187 participates in phosphoenolpyruvate binding. Aspartate 333 acts as the Proton acceptor in catalysis. 2 residues coordinate phosphoenolpyruvate: arginine 364 and arginine 405.

It belongs to the EPSP synthase family. Monomer.

It localises to the cytoplasm. The enzyme catalyses 3-phosphoshikimate + phosphoenolpyruvate = 5-O-(1-carboxyvinyl)-3-phosphoshikimate + phosphate. It functions in the pathway metabolic intermediate biosynthesis; chorismate biosynthesis; chorismate from D-erythrose 4-phosphate and phosphoenolpyruvate: step 6/7. Catalyzes the transfer of the enolpyruvyl moiety of phosphoenolpyruvate (PEP) to the 5-hydroxyl of shikimate-3-phosphate (S3P) to produce enolpyruvyl shikimate-3-phosphate and inorganic phosphate. This Xylella fastidiosa (strain 9a5c) protein is 3-phosphoshikimate 1-carboxyvinyltransferase.